A 397-amino-acid polypeptide reads, in one-letter code: 8-amino-7-oxononanoate synthase (397 aa).

A substrate-binding site is contributed by Arg23. Residue 110 to 111 (GY) participates in pyridoxal 5'-phosphate binding. His135 lines the substrate pocket. 3 residues coordinate pyridoxal 5'-phosphate: Ser181, His209, and Thr237. Lys240 carries the N6-(pyridoxal phosphate)lysine modification. Residue Thr354 coordinates substrate.

This sequence belongs to the class-II pyridoxal-phosphate-dependent aminotransferase family. BioF subfamily. In terms of assembly, homodimer. It depends on pyridoxal 5'-phosphate as a cofactor.

It carries out the reaction 6-carboxyhexanoyl-[ACP] + L-alanine + H(+) = (8S)-8-amino-7-oxononanoate + holo-[ACP] + CO2. It participates in cofactor biosynthesis; biotin biosynthesis. In terms of biological role, catalyzes the decarboxylative condensation of pimeloyl-[acyl-carrier protein] and L-alanine to produce 8-amino-7-oxononanoate (AON), [acyl-carrier protein], and carbon dioxide. This is 8-amino-7-oxononanoate synthase from Anaeromyxobacter sp. (strain Fw109-5).